The following is a 429-amino-acid chain: Serine--tRNA ligase (429 aa).

234-236 lines the L-serine pocket; sequence TSE. ATP is bound by residues 265 to 267 and valine 281; that span reads RKE. Glutamate 288 serves as a coordination point for L-serine. 352–355 provides a ligand contact to ATP; sequence ELVS. Threonine 389 provides a ligand contact to L-serine.

Belongs to the class-II aminoacyl-tRNA synthetase family. Type-1 seryl-tRNA synthetase subfamily. Homodimer. The tRNA molecule probably binds across the dimer.

The catalysed reaction is tRNA(Ser) + L-serine + ATP = L-seryl-tRNA(Ser) + AMP + diphosphate + H(+). It carries out the reaction tRNA(Sec) + L-serine + ATP = L-seryl-tRNA(Sec) + AMP + diphosphate + H(+). It participates in aminoacyl-tRNA biosynthesis; selenocysteinyl-tRNA(Sec) biosynthesis; L-seryl-tRNA(Sec) from L-serine and tRNA(Sec): step 1/1. Its function is as follows. Catalyzes the attachment of serine to tRNA(Ser). Is also probably able to aminoacylate tRNA(Sec) with serine, to form the misacylated tRNA L-seryl-tRNA(Sec), which will be further converted into selenocysteinyl-tRNA(Sec). This chain is Serine--tRNA ligase, found in Encephalitozoon cuniculi (strain GB-M1) (Microsporidian parasite).